The primary structure comprises 161 residues: Nucleotide-binding protein Gmet_3206 (161 aa).

It belongs to the YajQ family.

Its function is as follows. Nucleotide-binding protein. The polypeptide is Nucleotide-binding protein Gmet_3206 (Geobacter metallireducens (strain ATCC 53774 / DSM 7210 / GS-15)).